A 407-amino-acid chain; its full sequence is Actinorhodin polyketide putative beta-ketoacyl synthase 2 (407 aa).

One can recognise a Ketosynthase family 3 (KS3) domain in the interval 1-402; it reads MSVLITGVGV…GFNSAAVLRR (402 aa).

It belongs to the thiolase-like superfamily. Beta-ketoacyl-ACP synthases family.

This Streptomyces coelicolor (strain ATCC BAA-471 / A3(2) / M145) protein is Actinorhodin polyketide putative beta-ketoacyl synthase 2.